Here is a 297-residue protein sequence, read N- to C-terminus: uncharacterized protein (297 aa).

Positions 267 to 297 (NTQHAGKPGAQHRTRRSPPAFRRADRLRQSA) are disordered. The segment covering 288–297 (RRADRLRQSA) has biased composition (basic and acidic residues).

This is an uncharacterized protein from Treponema pallidum (strain Nichols).